A 243-amino-acid chain; its full sequence is UPF0502 protein H16_B1091 (243 aa).

Positions 1–23 (MQSNHDSDASQAGDRPARPALRP) are disordered.

This sequence belongs to the UPF0502 family.

This Cupriavidus necator (strain ATCC 17699 / DSM 428 / KCTC 22496 / NCIMB 10442 / H16 / Stanier 337) (Ralstonia eutropha) protein is UPF0502 protein H16_B1091.